The following is a 548-amino-acid chain: Glutamyl-tRNA(Gln) amidotransferase subunit B, chloroplastic/mitochondrial (548 aa).

It belongs to the GatB/GatE family. GatB subfamily. Subunit of the heterotrimeric GatCAB amidotransferase (AdT) complex, composed of A, B and C subunits.

Its subcellular location is the mitochondrion. The protein localises to the plastid. The protein resides in the chloroplast. It carries out the reaction L-glutamyl-tRNA(Gln) + L-glutamine + ATP + H2O = L-glutaminyl-tRNA(Gln) + L-glutamate + ADP + phosphate + H(+). Functionally, allows the formation of correctly charged Gln-tRNA(Gln) through the transamidation of misacylated Glu-tRNA(Gln) in chloroplasts and mitochondria. The reaction takes place in the presence of glutamine and ATP through an activated gamma-phospho-Glu-tRNA(Gln). The protein is Glutamyl-tRNA(Gln) amidotransferase subunit B, chloroplastic/mitochondrial of Sorghum bicolor (Sorghum).